The chain runs to 28 residues: APDFSTLELIPDKLKEFGNTLEEKARMA.

The protein belongs to the apolipoprotein C1 family.

It localises to the secreted. Its function is as follows. Inhibitor of lipoprotein binding to the low density lipoprotein (LDL) receptor, LDL receptor-related protein, and very low density lipoprotein (VLDL) receptor. Associates with high density lipoproteins (HDL) and the triacylglycerol-rich lipoproteins in the plasma and makes up about 10% of the protein of the VLDL and 2% of that of HDL. Appears to interfere directly with fatty acid uptake and is also the major plasma inhibitor of cholesteryl ester transfer protein (CETP). Binds free fatty acids and reduces their intracellular esterification. Modulates the interaction of APOE with beta-migrating VLDL and inhibits binding of beta-VLDL to the LDL receptor-related protein. In Oryctolagus cuniculus (Rabbit), this protein is Apolipoprotein C-I (APOC1).